Here is a 347-residue protein sequence, read N- to C-terminus: GMP reductase (347 aa).

108 to 131 (ADFEKTKQILDLNPALNFVCIDVA) serves as a coordination point for NADP(+). Positions 181 and 183 each coordinate K(+). Cysteine 186 serves as the catalytic Thioimidate intermediate. Residue 216-239 (IVSDGGCTTPGDVAKAFGGGADFV) participates in NADP(+) binding.

This sequence belongs to the IMPDH/GMPR family. GuaC type 1 subfamily. As to quaternary structure, homotetramer.

It catalyses the reaction IMP + NH4(+) + NADP(+) = GMP + NADPH + 2 H(+). Functionally, catalyzes the irreversible NADPH-dependent deamination of GMP to IMP. It functions in the conversion of nucleobase, nucleoside and nucleotide derivatives of G to A nucleotides, and in maintaining the intracellular balance of A and G nucleotides. This is GMP reductase from Shigella dysenteriae serotype 1 (strain Sd197).